A 357-amino-acid chain; its full sequence is DNA replication and repair protein RecF (357 aa).

Gly-30 to Thr-37 provides a ligand contact to ATP.

Belongs to the RecF family.

The protein resides in the cytoplasm. Its function is as follows. The RecF protein is involved in DNA metabolism; it is required for DNA replication and normal SOS inducibility. RecF binds preferentially to single-stranded, linear DNA. It also seems to bind ATP. This Cronobacter sakazakii (strain ATCC BAA-894) (Enterobacter sakazakii) protein is DNA replication and repair protein RecF.